Here is a 920-residue protein sequence, read N- to C-terminus: Rho guanine nucleotide exchange factor 1 (920 aa).

One can recognise an RGSL domain in the interval 39 to 230 (DQNSQFQSLE…SLYMRHLGVR (192 aa)). The tract at residues 231 to 404 (TKSGDKKSGR…PGWRELVPPD (174 aa)) is disordered. The segment covering 281-311 (DCRHLKVEADAEKPGPADRKGGLGMSSRDRT) has biased composition (basic and acidic residues). The span at 364-380 (STEDNGETESPEPGDDG) shows a compositional bias: acidic residues. 5 positions are modified to phosphoserine: serine 373, glycine 386, glutamate 390, serine 408, and serine 412. The DH domain occupies 415 to 604 (KRQEVISELL…REILHHVNQA (190 aa)). Phosphothreonine is present on residues arginine 432 and threonine 694. Residues 646–759 (KLVHEGPLTW…WCNLITETAG (114 aa)) form the PH domain. At tyrosine 737 the chain carries Phosphotyrosine; by JAK2. Disordered regions lie at residues 764 to 797 (PAPASRLKPRPSPSSIREPLLSSSENGTGGAEMA) and 840 to 864 (TEEDSGAGPPRDGDGVPGGRAPGPV). Positions 865-894 (HTQEIEENLLSLEVAIRQLEELEEEFCRLR) form a coiled coil. Serine 905 is modified (phosphoserine).

Interacts with RHOA, GNA12 and GNA13. Homooligomerizes through the coiled coil region. Interacts with CTNNAL1. May interact with CCPG1. Post-translationally, phosphorylated by PKCA. Angiotensin-2 induced Tyr-737 phosphorylation is mediated by JAK2. Isoform 5 is phosphorylated at 'Ser-390'. As to expression, ubiquitously expressed.

It is found in the cytoplasm. It localises to the membrane. Seems to play a role in the regulation of RhoA GTPase by guanine nucleotide-binding alpha-12 (GNA12) and alpha-13 (GNA13) subunits. Acts as a GTPase-activating protein (GAP) for GNA12 and GNA13, and as guanine nucleotide exchange factor (GEF) for RhoA GTPase. Activated G alpha 13/GNA13 stimulates the RhoGEF activity through interaction with the RGS-like domain. This GEF activity is inhibited by binding to activated GNA12. Mediates angiotensin-2-induced RhoA activation. Isoform 3 and isoform 4 do not homooligomerize and show an enhanced RhoGEF activity. In lymphoid follicles, may trigger activation of GNA13 as part of S1PR2-dependent signaling pathway that leads to inhibition of germinal center (GC) B cell growth and migration outside the GC niche. In Mus musculus (Mouse), this protein is Rho guanine nucleotide exchange factor 1 (Arhgef1).